The primary structure comprises 309 residues: HPr kinase/phosphorylase (309 aa).

Catalysis depends on residues His-138 and Lys-159. 153–160 (GKSGIGKS) provides a ligand contact to ATP. Ser-160 serves as a coordination point for Mg(2+). The active-site Proton acceptor; for phosphorylation activity. Proton donor; for dephosphorylation activity is the Asp-177. The tract at residues 201-210 (IEVRGIGILD) is important for the catalytic mechanism of both phosphorylation and dephosphorylation. Residue Glu-202 participates in Mg(2+) binding. Arg-243 is a catalytic residue. The important for the catalytic mechanism of dephosphorylation stretch occupies residues 264 to 269 (PIKPAR).

This sequence belongs to the HPrK/P family. As to quaternary structure, homohexamer. Requires Mg(2+) as cofactor.

The enzyme catalyses [HPr protein]-L-serine + ATP = [HPr protein]-O-phospho-L-serine + ADP + H(+). It carries out the reaction [HPr protein]-O-phospho-L-serine + phosphate + H(+) = [HPr protein]-L-serine + diphosphate. In terms of biological role, catalyzes the ATP- as well as the pyrophosphate-dependent phosphorylation of a specific serine residue in HPr, a phosphocarrier protein of the phosphoenolpyruvate-dependent sugar phosphotransferase system (PTS). HprK/P also catalyzes the pyrophosphate-producing, inorganic phosphate-dependent dephosphorylation (phosphorolysis) of seryl-phosphorylated HPr (P-Ser-HPr). The two antagonistic activities of HprK/P are regulated by several intracellular metabolites, which change their concentration in response to the absence or presence of rapidly metabolisable carbon sources (glucose, fructose, etc.) in the growth medium. Therefore, by controlling the phosphorylation state of HPr, HPrK/P is a sensor enzyme that plays a major role in the regulation of carbon metabolism and sugar transport: it mediates carbon catabolite repression (CCR), and regulates PTS-catalyzed carbohydrate uptake and inducer exclusion. This chain is HPr kinase/phosphorylase, found in Alkaliphilus metalliredigens (strain QYMF).